A 678-amino-acid polypeptide reads, in one-letter code: Inositol-trisphosphate 3-kinase C (678 aa).

Disordered regions lie at residues 26-128 and 151-300; these read LEAL…RRNS and DLQS…LDLS. The segment covering 44–58 has biased composition (gly residues); it reads PGAGGPTGRPEGGGP. 2 stretches are compositionally biased toward basic and acidic residues: residues 61-76 and 107-116; these read WIEE…RTDL and EKPRQNKELD. A Phosphoserine modification is found at Ser160. 2 stretches are compositionally biased toward basic and acidic residues: residues 173 to 196 and 220 to 236; these read ELDR…DNLR and SGKE…HDTD. The Nuclear export signal motif lies at 318 to 326; that stretch reads LCPVPRLII. The segment at 328 to 380 is disordered; that stretch reads PETPEPEAQPVGPQSRIEGGTGGFSSASSFDESEDDLVAGGGGTSDPEDRAGS. Residue Thr330 is modified to Phosphothreonine. Residue Ser398 is modified to Phosphoserine. Residues Lys426, 466–468, and Asp479 each bind ATP; that span reads EDL. Substrate is bound by residues Lys481, 502–508, and 529–536; these read RKDMYEK and KPRYMQWR. The interval 504-512 is calmodulin-binding; the sequence is DMYEKMVAV. 2 residues coordinate ATP: Lys553 and Asp633. Lys636 is a binding site for substrate.

Belongs to the inositol phosphokinase (IPK) family.

The protein localises to the nucleus. It is found in the cytoplasm. The enzyme catalyses 1D-myo-inositol 1,4,5-trisphosphate + ATP = 1D-myo-inositol 1,3,4,5-tetrakisphosphate + ADP + H(+). Its activity is regulated as follows. Activated by calcium/calmodulin. Inhibited by high concentrations of the substrate Ins(1,2,4)P3, and allosterically activated by the product Ins(1,3,4,5)P4. Catalyzes the phosphorylation of 1D-myo-inositol 1,4,5-trisphosphate (InsP3) into 1D-myo-inositol 1,3,4,5-tetrakisphosphate and participates to the regulation of calcium homeostasis. Can phosphorylate inositol 2,4,5-triphosphate to inositol 2,4,5,6-tetraphosphate. This is Inositol-trisphosphate 3-kinase C (Itpkc) from Mus musculus (Mouse).